The following is a 403-amino-acid chain: Peptidyl-prolyl cis-trans isomerase FKBP8 (403 aa).

The interval 26–54 is disordered; it reads VLDGVDDAEEEDDLSGLPPLEDMGQPTVE. Over residues 28 to 39 the composition is skewed to acidic residues; it reads DGVDDAEEEDDL. One can recognise a PPIase FKBP-type domain in the interval 110 to 195; the sequence is GQVVTVHLQM…CLEVTLKTAE (86 aa). Residues 212 to 245 form a TPR 1 repeat; sequence ANRKRECGNAHYQRADFVLAANSYDLAIKAITSN. Residues Lys-240, Lys-262, Lys-264, and Lys-275 each participate in a glycyl lysine isopeptide (Lys-Gly) (interchain with G-Cter in ubiquitin) cross-link. 2 TPR repeats span residues 263–296 and 297–330; these read VKCL…QPDN and IKAL…EPSN. Ser-287 is modified (phosphoserine). Glycyl lysine isopeptide (Lys-Gly) (interchain with G-Cter in ubiquitin) cross-links involve residues Lys-298, Lys-305, Lys-325, Lys-331, Lys-339, Lys-342, and Lys-343. The helical transmembrane segment at 381-401 threads the bilayer; sequence WLFGATAVALGGVALSVVIAA.

Homomultimers or heteromultimers (Potential). Forms heterodimer with calmodulin. When activated by calmodulin and calcium, interacts with the BH4 domain of BCL2 and weakly with BCLX isoform Bcl-X(L). Does not bind and inhibit calcineurin. Interacts with ZFYVE27; may negatively regulate ZFYVE27 phosphorylation. Requires Ca(2+) as cofactor. In terms of processing, ubiquitinated by PRKN during mitophagy, leading to its degradation and enhancement of mitophagy. Deubiquitinated by USP30.

Its subcellular location is the mitochondrion membrane. The enzyme catalyses [protein]-peptidylproline (omega=180) = [protein]-peptidylproline (omega=0). Constitutively inactive PPiase, which becomes active when bound to calmodulin and calcium. Seems to act as a chaperone for BCL2, targets it to the mitochondria and modulates its phosphorylation state. The BCL2/FKBP8/calmodulin/calcium complex probably interferes with the binding of BCL2 to its targets. The active form of FKBP8 may therefore play a role in the regulation of apoptosis. In Rattus norvegicus (Rat), this protein is Peptidyl-prolyl cis-trans isomerase FKBP8 (Fkbp8).